A 406-amino-acid chain; its full sequence is Argininosuccinate synthase (406 aa).

ATP is bound by residues 10–18 (AYSGGLDTS) and Ala37. Tyr88 and Ser93 together coordinate L-citrulline. Gly118 provides a ligand contact to ATP. Residues Thr120, Asn124, and Asp125 each contribute to the L-aspartate site. Asn124 lines the L-citrulline pocket. L-citrulline is bound by residues Arg128, Ser180, Ser189, Glu265, and Tyr277.

This sequence belongs to the argininosuccinate synthase family. Type 1 subfamily. As to quaternary structure, homotetramer.

Its subcellular location is the cytoplasm. The enzyme catalyses L-citrulline + L-aspartate + ATP = 2-(N(omega)-L-arginino)succinate + AMP + diphosphate + H(+). Its pathway is amino-acid biosynthesis; L-arginine biosynthesis; L-arginine from L-ornithine and carbamoyl phosphate: step 2/3. This Methylobacillus flagellatus (strain ATCC 51484 / DSM 6875 / VKM B-1610 / KT) protein is Argininosuccinate synthase.